The primary structure comprises 822 residues: Myosin-D (822 aa).

Residues Leu-95 to Arg-770 enclose the Myosin motor domain. An ATP-binding site is contributed by Gly-189 to Thr-196. Positions Ser-660–Asp-670 are actin-binding. The tail stretch occupies residues Ala-772–Cys-822.

It belongs to the TRAFAC class myosin-kinesin ATPase superfamily. Myosin family.

It is found in the cell membrane. The protein resides in the cytoplasm. Myosins are actin-based motor molecules with ATPase activity. Unconventional myosins serve in intracellular movements. Their highly divergent tails are presumed to bind to membranous compartments, which would be moved relative to actin filaments. This chain is Myosin-D, found in Toxoplasma gondii.